The primary structure comprises 1601 residues: Rap guanine nucleotide exchange factor 6 (1601 aa).

Met-1 carries the post-translational modification N-acetylmethionine. Disordered regions lie at residues 1 to 22 and 179 to 250; these read MNSP…ERTP and PHPQ…QGRD. A Phosphoserine modification is found at Ser-3. Residues 187–205 show a composition bias toward low complexity; it reads SSSQSGCSIASDSGSSSLS. Residues 228 to 241 are compositionally biased toward acidic residues; the sequence is VDSEDDEEEDEEID. A nucleoside 3',5'-cyclic phosphate is bound at residue 280-399; that stretch reads AFANMTMSVR…VEEEGEIVMV (120 aa). The region spanning 412–526 is the N-terminal Ras-GEF domain; the sequence is KGHIVIKATP…LLNIACAAKA (115 aa). The region spanning 530–615 is the PDZ domain; that stretch reads QVVLQKASRE…LTVKTNIFVF (86 aa). The 87-residue stretch at 749–835 folds into the Ras-associating domain; that stretch reads PDQVIRVFKV…GRYYLKNNME (87 aa). Residues 860 to 1088 enclose the Ras-GEF domain; that stretch reads STIEVATQLS…LDVQGGAHKK (229 aa). 4 disordered regions span residues 1192-1274, 1302-1324, 1455-1478, and 1571-1601; these read IRKK…SRSS, ESTG…QHGP, LEST…VYKT, and QRHN…VSAV. Low complexity-rich tracts occupy residues 1229 to 1238 and 1255 to 1274; these read SVASSLHSSP and SAKS…SRSS. A compositionally biased stretch (acidic residues) spans 1586 to 1601; that stretch reads TDADSEADENEQVSAV.

As to quaternary structure, interacts with the second PDZ domain of human PTP1e. Isoform 3 has highest expression levels in the brain, heart, liver, lung and placenta and is barely detectable in skeletal muscle, kidney and pancreas.

The protein resides in the cytoplasm. The protein localises to the cell membrane. Its function is as follows. Guanine nucleotide exchange factor (GEF) for Rap1A, Rap2A and M-Ras GTPases. Does not interact with cAMP. This chain is Rap guanine nucleotide exchange factor 6 (RAPGEF6), found in Homo sapiens (Human).